A 689-amino-acid polypeptide reads, in one-letter code: MTTQDFLLEIGCEELPPRRLNQLSQALSQTIKSELEKADLSFENIHRYATPRRLAVLVNNLALQQPQRKIERQGPSVKAAFDKDQTPTLACFGFAQSCGVSTAQLKVKKTKKGEFIYCEIEQPGQNTLDLLPNIIQSALKQLPTPKAMRWGDHKEFFVRPVHWIILMLGKDLVPATLLGKMASCETRGHRFHHPKNILVTKPDDYQKLLLTHGMVIADFEKRREKIRDLIQKAASEKGEAIIDEGLLEEVTGMVEWPVILVGNFKAEFLELPPEVLITTMKVHQRTFPIKNKNGDLLPYFIIVSNIESKNPKRVIVGNERVINARLADASFFYDNDLRTSLENRLPKLGDVIFQRQLGTLADKARRIEKLAAFIAKQINIDEQLAARAGLLSKCDLVSEMVYEFPTLQGIMGYYYAFHDKEPPLVAEAIKEHYLPRFSGDQLPRNLLSACVAVADRIDTIIGIIGINKSPTGDKDPFALRRAALGILRILIEKELSLDLFALLNEAKNNYAVELPNVNVANQSFDFIIERLRAWYLEKEVPASVFMAVLASHPADPLDFDRRIKAVQHFQTLPEADALAAANKRVSNILKKQAAELKSKTIDHSLFDSDAEHLLADQLKERAELVNNLYKKADYTKALSELASLKEPIDIFFDKVMVMVDDKEKRENRLALLSSLQQLFSQIADISLLS.

This sequence belongs to the class-II aminoacyl-tRNA synthetase family. Tetramer of two alpha and two beta subunits.

It localises to the cytoplasm. The enzyme catalyses tRNA(Gly) + glycine + ATP = glycyl-tRNA(Gly) + AMP + diphosphate. The protein is Glycine--tRNA ligase beta subunit of Coxiella burnetii (strain Dugway 5J108-111).